The primary structure comprises 480 residues: MTEAEKIEVRDITRIERIGAHSHIRGLGLDDVLEARAVSQGMVGQKDARRAAGVVVQMVREGKIAGRCILLAGEPSTGKTAIAVGMAQALGTETPFTSMSGSEIYSLEMSKTEALSQALRKSIGVRIKEETEIIEGEVVEIQIERPATGTGQKVGKVTLKTTEMETNYDLGNKIIECFMKEKIQAGDVITIDKASGKVNKLGRSFTRARDYDATGAQTRFVQCPEGELQKRKEVVHTVTLHEIDVINSRTHGFLALFSGDTGEIKQEVRDQINNKVLEWREEGKAEINPGVLFIDEVHMLDIECFSYLNRALESDMAPVVVMATNRGITRIRGTNYRSPHGIPIDLLDRMIIIRTVPYSEKEVKEILKIRCEEEDCVMHPDALTILTRIATDTSLRYAIQLITTANLVCRRRKATEVNTEDVKKVYSLFLDENRSSKILKEYQDDYMFSEITEKEEDFGIGGGSKRRLDIGAGDAEAMEH.

Residue 73–80 (GEPSTGKT) coordinates ATP.

The protein belongs to the RuvB family. Forms homohexameric rings. May form a dodecamer with rept made of two stacked hexameric rings. Component of the chromatin remodeling Ino80 complex.

The protein resides in the nucleus. It carries out the reaction ATP + H2O = ADP + phosphate + H(+). In terms of biological role, acts as a transcriptional coactivator in Wg signaling caused by altered arm signaling. Pont and rept interfere antagonistically with nuclear arm signaling function, and are required to enhance or reduce arm activity, respectively. Also an essential cofactor for the normal function of Myc; required for cellular proliferation and growth. Functionally, proposed core component of the chromatin remodeling Ino80 complex which is involved in transcriptional regulation, DNA replication and probably DNA repair. The polypeptide is RuvB-like helicase 2 (Drosophila pseudoobscura pseudoobscura (Fruit fly)).